Here is a 132-residue protein sequence, read N- to C-terminus: Proline-rich protein sgp2 (132 aa).

A signal peptide spans 1 to 20 (MKYCFVFFVTLICLIANCSA). Disordered regions lie at residues 23–62 (EGDKGLSAAPTDGKQIERASDKTSEENDGNTNAQGDSNSR) and 87–132 (GASV…LGLP). Positions 36–47 (KQIERASDKTSE) are enriched in basic and acidic residues. The span at 51 to 62 (GNTNAQGDSNSR) shows a compositional bias: polar residues. Positions 91–105 (PQLPDLPTTPSLPDM) are enriched in low complexity.

Its subcellular location is the secreted. The polypeptide is Proline-rich protein sgp2 (sgp2) (Glossina morsitans morsitans (Savannah tsetse fly)).